A 33-amino-acid polypeptide reads, in one-letter code: Alpha-amanitin proprotein (33 aa).

A propeptide spanning residues 1–10 (MSDINATRLP) is cleaved from the precursor. I11 carries the post-translational modification (3R,4R)-4,5-dihydroxyisoleucine; in form alpha-amanitin. I11 is modified ((3R,4S)-4-hydroxyisoleucine; in form gamma-amanitin). Residues 11-18 (IWGIGCNP) constitute a cross-link (cyclopeptide (Ile-Pro)). The segment at residues 12–16 (WGIGC) is a cross-link (2'-cysteinyl-6'-hydroxytryptophan sulfoxide (Trp-Cys)). P18 carries the post-translational modification 4-hydroxyproline. Residues 19-33 (SVGDEVTALLTSGEA) constitute a propeptide that is removed on maturation.

It belongs to the MSDIN fungal toxin family. Post-translationally, processed by the macrocyclase-peptidase enzyme POPB to yield a toxic cyclic decapeptide. POPB first removes 10 residues from the N-terminus. Conformational trapping of the remaining peptide forces the enzyme to release this intermediate rather than proceed to macrocyclization. The enzyme rebinds the remaining peptide in a different conformation and catalyzes macrocyclization of the N-terminal 8 residues.

Its function is as follows. Major toxin belonging to the bicyclic octapeptides amatoxins that acts by binding non-competitively to RNA polymerase II and greatly slowing the elongation of transcripts from target promoters. This is Alpha-amanitin proprotein from Amanita fuliginea (East Asian brown death cap).